Reading from the N-terminus, the 128-residue chain is MANPRSNRKKVKKQVVDAVAHIHASFNNTIVTITDRQGNALSWATAGGSGFRGSRKSTPFAAQVASERAATAAAEYGVKNVDVLVKGPGPGRESAVRALNAAGFRVQSITDATPVPHNGCRPPKKRRV.

Belongs to the universal ribosomal protein uS11 family. As to quaternary structure, part of the 30S ribosomal subunit. Interacts with proteins S7 and S18. Binds to IF-3.

Located on the platform of the 30S subunit, it bridges several disparate RNA helices of the 16S rRNA. Forms part of the Shine-Dalgarno cleft in the 70S ribosome. This is Small ribosomal subunit protein uS11 from Chromohalobacter salexigens (strain ATCC BAA-138 / DSM 3043 / CIP 106854 / NCIMB 13768 / 1H11).